A 300-amino-acid polypeptide reads, in one-letter code: Merozoite surface protein 2 (300 aa).

A signal peptide spans 1–20; the sequence is MKVIKTLSIINFFIFVTFNI. Residues asparagine 22 and asparagine 36 are each glycosylated (N-linked (GlcNAc...) asparagine). Residues 44–226 are polymorphic region; sequence EESKPPTGAV…EQTESPELQS (183 aa). The 1; inverted repeat unit spans residues 51–58; it reads GAVAGSGA. The interval 51 to 110 is 7 X 8 AA tandem repeats of G-S-G-A-G-A-V-A; that stretch reads GAVAGSGAGAGSGAGAVAGSGAGAVAGSGAGAVAGSGAGAVAGSGAGAVAGSGAVAGSGA. Repeat copies occupy residues 61-68, 69-76, 77-84, 85-92, and 93-100. The stretch at 103 to 110 is one 7; inverted repeat; that stretch reads GAVAGSGA. Residues 111–261 are disordered; it reads GNGANPGADA…DSQKECTDGN (151 aa). Residues 123-148 show a composition bias toward low complexity; it reads SPSTPATTTTTTTTNDAEASTSTSSE. A compositionally biased stretch (basic and acidic residues) spans 149-165; the sequence is NRNHNNAETNPKGKGEV. 2 stretches are compositionally biased toward polar residues: residues 167–193 and 200–228; these read KPNQ…NVPR and KSPT…QSAP. Asparagine 177 is a glycosylation site (N-linked (GlcNAc...) asparagine). Asparagine 249 carries an N-linked (GlcNAc...) asparagine glycan. A disulfide bond links cysteine 257 and cysteine 265. 2 N-linked (GlcNAc...) asparagine glycosylation sites follow: asparagine 273 and asparagine 274. Asparagine 274 carries GPI-anchor amidated asparagine lipidation. The propeptide at 275–300 is removed in mature form; that stretch reads SSNIASINKFVVLISATLVLSFAIFI.

It localises to the cell membrane. Its function is as follows. May play a role in the merozoite attachment to the erythrocyte. The sequence is that of Merozoite surface protein 2 from Plasmodium falciparum (isolate imr143).